The following is a 65-amino-acid chain: Large ribosomal subunit protein bL35 (65 aa).

Residues 1–16 show a composition bias toward basic residues; it reads MPKMKTKSGAKKRFRV. The segment at 1–25 is disordered; the sequence is MPKMKTKSGAKKRFRVRPGGTVKRG.

Belongs to the bacterial ribosomal protein bL35 family.

The sequence is that of Large ribosomal subunit protein bL35 from Herminiimonas arsenicoxydans.